A 344-amino-acid chain; its full sequence is Anthranilate phosphoribosyltransferase (344 aa).

5-phospho-alpha-D-ribose 1-diphosphate contacts are provided by residues glycine 84, 87–88 (GD), serine 92, 94–97 (NIST), 112–120 (KHGNRSASG), and serine 124. Residue glycine 84 participates in anthranilate binding. Serine 96 contributes to the Mg(2+) binding site. Asparagine 115 is an anthranilate binding site. Arginine 170 contributes to the anthranilate binding site. 2 residues coordinate Mg(2+): aspartate 229 and glutamate 230.

Belongs to the anthranilate phosphoribosyltransferase family. In terms of assembly, homodimer. The cofactor is Mg(2+).

The catalysed reaction is N-(5-phospho-beta-D-ribosyl)anthranilate + diphosphate = 5-phospho-alpha-D-ribose 1-diphosphate + anthranilate. The protein operates within amino-acid biosynthesis; L-tryptophan biosynthesis; L-tryptophan from chorismate: step 2/5. Functionally, catalyzes the transfer of the phosphoribosyl group of 5-phosphorylribose-1-pyrophosphate (PRPP) to anthranilate to yield N-(5'-phosphoribosyl)-anthranilate (PRA). The sequence is that of Anthranilate phosphoribosyltransferase from Synechococcus sp. (strain RCC307).